The primary structure comprises 286 residues: tRNA (guanine-N(7)-)-methyltransferase (286 aa).

S-adenosyl-L-methionine contacts are provided by residues G91, 114 to 115 (EI), 158 to 159 (NS), and L178. The active site involves D181. 256-258 (TEE) contacts S-adenosyl-L-methionine.

Belongs to the class I-like SAM-binding methyltransferase superfamily. TrmB family. Forms a complex with TRM82.

It is found in the nucleus. It catalyses the reaction guanosine(46) in tRNA + S-adenosyl-L-methionine = N(7)-methylguanosine(46) in tRNA + S-adenosyl-L-homocysteine. It participates in tRNA modification; N(7)-methylguanine-tRNA biosynthesis. Its function is as follows. Catalyzes the formation of N(7)-methylguanine at position 46 (m7G46) in tRNA. This chain is tRNA (guanine-N(7)-)-methyltransferase, found in Cryptococcus neoformans var. neoformans serotype D (strain B-3501A) (Filobasidiella neoformans).